The following is a 157-amino-acid chain: Ribosomal RNA large subunit methyltransferase H (157 aa).

S-adenosyl-L-methionine-binding positions include Leu75, Gly106, and 125–130 (FSELTF).

It belongs to the RNA methyltransferase RlmH family. Homodimer.

It is found in the cytoplasm. The enzyme catalyses pseudouridine(1915) in 23S rRNA + S-adenosyl-L-methionine = N(3)-methylpseudouridine(1915) in 23S rRNA + S-adenosyl-L-homocysteine + H(+). Functionally, specifically methylates the pseudouridine at position 1915 (m3Psi1915) in 23S rRNA. This chain is Ribosomal RNA large subunit methyltransferase H, found in Malacoplasma penetrans (strain HF-2) (Mycoplasma penetrans).